The following is a 199-amino-acid chain: NADH-quinone oxidoreductase subunit C (199 aa).

Belongs to the complex I 30 kDa subunit family. In terms of assembly, NDH-1 is composed of 14 different subunits. Subunits NuoB, C, D, E, F, and G constitute the peripheral sector of the complex.

The protein resides in the cell inner membrane. It carries out the reaction a quinone + NADH + 5 H(+)(in) = a quinol + NAD(+) + 4 H(+)(out). NDH-1 shuttles electrons from NADH, via FMN and iron-sulfur (Fe-S) centers, to quinones in the respiratory chain. The immediate electron acceptor for the enzyme in this species is believed to be ubiquinone. Couples the redox reaction to proton translocation (for every two electrons transferred, four hydrogen ions are translocated across the cytoplasmic membrane), and thus conserves the redox energy in a proton gradient. The protein is NADH-quinone oxidoreductase subunit C of Cupriavidus taiwanensis (strain DSM 17343 / BCRC 17206 / CCUG 44338 / CIP 107171 / LMG 19424 / R1) (Ralstonia taiwanensis (strain LMG 19424)).